We begin with the raw amino-acid sequence, 479 residues long: 3-phytase B (479 aa).

The N-terminal stretch at 1 to 19 is a signal peptide; sequence MPRTSLLTLACALATGASA. The active-site Nucleophile is H82. N-linked (GlcNAc...) asparagine glycosylation is found at N106, N191, N227, N250, and N315. D338 (proton donor) is an active-site residue. N-linked (GlcNAc...) asparagine glycosylation is found at N425, N442, and N458.

It belongs to the histidine acid phosphatase family.

It carries out the reaction 1D-myo-inositol hexakisphosphate + H2O = 1D-myo-inositol 1,2,4,5,6-pentakisphosphate + phosphate. Functionally, catalyzes the hydrolysis of inorganic orthophosphate from phytate. The protein is 3-phytase B (phyB) of Aspergillus niger.